Consider the following 21-residue polypeptide: Formate ester dehydrogenase beta chain (21 aa).

In terms of assembly, heterotrimer composed of an alpha, a beta and a gamma chain.

The polypeptide is Formate ester dehydrogenase beta chain (Amycolatopsis methanolica).